The sequence spans 219 residues: 2,3-bisphosphoglycerate-dependent phosphoglycerate mutase 2 (219 aa).

Residues Arg-8 to Asn-15, Thr-21 to Gly-22, Arg-58, Glu-85 to Tyr-88, Lys-96, Arg-112 to Arg-113, and Gly-156 to Asn-157 contribute to the substrate site. His-9 serves as the catalytic Tele-phosphohistidine intermediate. The active-site Proton donor/acceptor is the Glu-85.

The protein belongs to the phosphoglycerate mutase family. BPG-dependent PGAM subfamily.

It carries out the reaction (2R)-2-phosphoglycerate = (2R)-3-phosphoglycerate. It participates in carbohydrate degradation; glycolysis; pyruvate from D-glyceraldehyde 3-phosphate: step 3/5. Catalyzes the interconversion of 2-phosphoglycerate and 3-phosphoglycerate. This chain is 2,3-bisphosphoglycerate-dependent phosphoglycerate mutase 2, found in Gloeobacter violaceus (strain ATCC 29082 / PCC 7421).